A 77-amino-acid polypeptide reads, in one-letter code: U8-lycotoxin-Ls1s (77 aa).

An N-terminal signal peptide occupies residues 1-20 (MKLIIFTGLVLFAIVSLIEA). A propeptide spanning residues 21–26 (QAENER) is cleaved from the precursor.

The protein belongs to the neurotoxin 19 (CSTX) family. 08 (U8-Lctx) subfamily. Contains 4 disulfide bonds. Expressed by the venom gland.

Its subcellular location is the secreted. This Lycosa singoriensis (Wolf spider) protein is U8-lycotoxin-Ls1s.